Here is a 191-residue protein sequence, read N- to C-terminus: dTTP/UTP pyrophosphatase (191 aa).

Asp-69 serves as the catalytic Proton acceptor.

Belongs to the Maf family. YhdE subfamily. The cofactor is a divalent metal cation.

The protein resides in the cytoplasm. The enzyme catalyses dTTP + H2O = dTMP + diphosphate + H(+). It carries out the reaction UTP + H2O = UMP + diphosphate + H(+). Functionally, nucleoside triphosphate pyrophosphatase that hydrolyzes dTTP and UTP. May have a dual role in cell division arrest and in preventing the incorporation of modified nucleotides into cellular nucleic acids. The chain is dTTP/UTP pyrophosphatase from Pelotomaculum thermopropionicum (strain DSM 13744 / JCM 10971 / SI).